Consider the following 366-residue polypeptide: G kinase-anchoring protein 1 (366 aa).

The interaction with IRS1 stretch occupies residues 1–95; that stretch reads MASAVLSSVP…SHAVCNAQHD (95 aa). Disordered regions lie at residues 20–110 and 147–177; these read QVDS…REEN and EYED…DRPL. 3 positions are modified to phosphoserine: S23, S25, and S27. Over residues 39-50 the composition is skewed to polar residues; it reads TGKSQTLGSKST. Positions 47–77 form a coiled coil; sequence SKSTTNEKKREKRRKKKEQQQSEANELRNLA. A Phosphoserine; by PKG modification is found at S106. 2 coiled-coil regions span residues 128–160 and 243–353; these read ADLE…QSKV and EHNQ…YQGG.

This sequence belongs to the GKAP1 family. In terms of assembly, interacts with PRKG1 and IRS1.

It is found in the golgi apparatus. Regulates insulin-dependent IRS1 tyrosine phosphorylation in adipocytes by modulating the availability of IRS1 to IR tyrosine kinase. Its association with IRS1 is required for insulin-induced translocation of SLC2A4 to the cell membrane. Involved in TNF-induced impairment of insulin-dependent IRS1 tyrosine phosphorylation. In Homo sapiens (Human), this protein is G kinase-anchoring protein 1 (GKAP1).